We begin with the raw amino-acid sequence, 185 residues long: Riboflavin kinase (185 aa).

Mg(2+)-binding residues include Thr41 and Asn43. Glu122 serves as the catalytic Nucleophile.

It belongs to the flavokinase family. Requires Zn(2+) as cofactor. It depends on Mg(2+) as a cofactor.

The catalysed reaction is riboflavin + ATP = FMN + ADP + H(+). The protein operates within cofactor biosynthesis; FMN biosynthesis; FMN from riboflavin (ATP route): step 1/1. In terms of biological role, catalyzes the phosphorylation of riboflavin (vitamin B2) to form flavin mononucleotide (FMN) coenzyme. This chain is Riboflavin kinase (FMN1), found in Kluyveromyces lactis (strain ATCC 8585 / CBS 2359 / DSM 70799 / NBRC 1267 / NRRL Y-1140 / WM37) (Yeast).